A 164-amino-acid chain; its full sequence is Protein-export protein SecB (164 aa).

A compositionally biased stretch (basic and acidic residues) spans 1-12 (MPDKDEITHDAQ). Residues 1-22 (MPDKDEITHDAQSENEESLPLA) are disordered.

Belongs to the SecB family. In terms of assembly, homotetramer, a dimer of dimers. One homotetramer interacts with 1 SecA dimer.

The protein resides in the cytoplasm. Functionally, one of the proteins required for the normal export of preproteins out of the cell cytoplasm. It is a molecular chaperone that binds to a subset of precursor proteins, maintaining them in a translocation-competent state. It also specifically binds to its receptor SecA. The chain is Protein-export protein SecB from Neorickettsia sennetsu (strain ATCC VR-367 / Miyayama) (Ehrlichia sennetsu).